Consider the following 284-residue polypeptide: 4-hydroxybenzoate octaprenyltransferase (284 aa).

The next 9 helical transmembrane spans lie at 19–39 (IPIL…SHGL), 42–62 (ISYL…GCII), 85–105 (GQLS…VAFI), 107–127 (VLFL…LAIL), 134–154 (FFAI…FMAF), 165–185 (AWIF…IYAL), 211–231 (ILLF…YCDF), 233–253 (SFFY…YFLY), and 261–281 (CINA…IAVI).

It belongs to the UbiA prenyltransferase family. The cofactor is Mg(2+).

It is found in the cell inner membrane. The catalysed reaction is all-trans-octaprenyl diphosphate + 4-hydroxybenzoate = 4-hydroxy-3-(all-trans-octaprenyl)benzoate + diphosphate. It functions in the pathway cofactor biosynthesis; ubiquinone biosynthesis. Catalyzes the prenylation of para-hydroxybenzoate (PHB) with an all-trans polyprenyl group. Mediates the second step in the final reaction sequence of ubiquinone-8 (UQ-8) biosynthesis, which is the condensation of the polyisoprenoid side chain with PHB, generating the first membrane-bound Q intermediate 3-octaprenyl-4-hydroxybenzoate. This is 4-hydroxybenzoate octaprenyltransferase from Francisella tularensis subsp. tularensis (strain FSC 198).